A 352-amino-acid polypeptide reads, in one-letter code: N-acetyl-gamma-glutamyl-phosphate reductase (352 aa).

The active site involves Cys-155.

Belongs to the NAGSA dehydrogenase family. Type 1 subfamily.

It localises to the cytoplasm. The enzyme catalyses N-acetyl-L-glutamate 5-semialdehyde + phosphate + NADP(+) = N-acetyl-L-glutamyl 5-phosphate + NADPH + H(+). The protein operates within amino-acid biosynthesis; L-arginine biosynthesis; N(2)-acetyl-L-ornithine from L-glutamate: step 3/4. In terms of biological role, catalyzes the NADPH-dependent reduction of N-acetyl-5-glutamyl phosphate to yield N-acetyl-L-glutamate 5-semialdehyde. This is N-acetyl-gamma-glutamyl-phosphate reductase from Cyanothece sp. (strain PCC 7425 / ATCC 29141).